A 769-amino-acid chain; its full sequence is MASRAPLRAARSPQDPGGRAAPAATGRAPLPSAGWCPLPPGRNSSSRPRLLLLLLLLLPDAGAQKGDGCGHTVLGPESGTLTSINYPHTYPNSTVCKWEIRVKTGERIRIKFGDFDIEDSDYCHLNYLKIFNGIGVSRTEIGKYCGLGLQMNQSIESKGSEITVLFMSGIHASGRGFLASYSVIDKQDLITCLDTVSNFLEPEFSKYCPAGCLLPFAEISGTIPHGYRDSSPLCMAGIHAGVVSDVLGGQISVVISKGTPYYESSLANNVTSMVGYLSTSLFTFKTSGCYGTLGMESGVIADPQITASSVLEWTDHMGQENSWKPEKARLRKPGPPWAAFATDEHQWLQIDLNKEKKITGIVTTGSTLIEHNYYVSAYRVLYSDDGQKWTVYREPGAAQDKIFQGNKDYHKDVRNNFLPPIIARFIRVNPVQWQQKIAMKVELLGCQFTLKGRLPKLTQPPPPRNSNNLKNTTVHPKLGRAPKFTQALQPRSRNDLPLLPAQTTATPDVKNTTVTPSVTKDVALAAVLVPVLVMALTTLILILVCAWHWRNRKKKAEGTYDLPHWDRAGWWKGVKQLLPAKSVEHEETPVRYSNSEVSHLSPREVTTVLQADSAEYAQPLVGGIVGTLHQRSTFKPEEGKEASYADLDPYNAPVQEVYHAYAEPLPVTGPEYATPIVMDMSGHSTASVGLPSTSTFRTAGNQPPALVGTYNTLLSRTDSCSSGQAQYDTPKGGKPAAAPEELVYQVPQSTQEASGAGRDEKFDAFKETL.

Low complexity predominate over residues 1–29; the sequence is MASRAPLRAARSPQDPGGRAAPAATGRAP. The disordered stretch occupies residues 1 to 39; the sequence is MASRAPLRAARSPQDPGGRAAPAATGRAPLPSAGWCPLP. Residues 1–63 form the signal peptide; the sequence is MASRAPLRAA…LLLLLPDAGA (63 aa). Over 64-523 the chain is Extracellular; sequence QKGDGCGHTV…VTPSVTKDVA (460 aa). Disulfide bonds link Cys69–Cys96 and Cys123–Cys145. Positions 69–184 constitute a CUB domain; the sequence is CGHTVLGPES…RGFLASYSVI (116 aa). A glycan (N-linked (GlcNAc...) asparagine) is linked at Asn92. Residue Asn152 is glycosylated (N-linked (GlcNAc...) asparagine). The LCCL domain occupies 184–282; the sequence is IDKQDLITCL…MVGYLSTSLF (99 aa). Cys212 and Cys234 are disulfide-bonded. Asn269 carries N-linked (GlcNAc...) asparagine glycosylation. Cys289 and Cys446 form a disulfide bridge. The F5/8 type C domain occupies 289 to 446; the sequence is CYGTLGMESG…IAMKVELLGC (158 aa). The disordered stretch occupies residues 455–476; that stretch reads PKLTQPPPPRNSNNLKNTTVHP. Residues 465–474 show a composition bias toward polar residues; sequence NSNNLKNTTV. N-linked (GlcNAc...) asparagine glycans are attached at residues Asn471 and Asn511. The helical transmembrane segment at 524–544 threads the bilayer; that stretch reads LAAVLVPVLVMALTTLILILV. Residues 545–769 are Cytoplasmic-facing; that stretch reads CAWHWRNRKK…EKFDAFKETL (225 aa). Phosphoserine is present on Ser601. Positions 719 to 769 are disordered; the sequence is SCSSGQAQYDTPKGGKPAAAPEELVYQVPQSTQEASGAGRDEKFDAFKETL. Positions 757-769 are enriched in basic and acidic residues; it reads GRDEKFDAFKETL.

The protein localises to the membrane. The chain is Discoidin, CUB and LCCL domain-containing protein 2 (Dcbld2) from Rattus norvegicus (Rat).